The following is a 395-amino-acid chain: MEKLNPYFGQFGGMFVPQILVPALKQLEAEFVRAQTDPEFLAELSELLTEYAGRPTPLTLCRNLTKGKKTKLYLKREDLLHGGAHKTNQVLGQALLAKRMGKKEIIAETGAGQHGVAAALACALLGLKCRVYMGAVDCERQKPNVFRMRLMGAEVIPVHSGSSTLKDACNEALRDWAGSYDTAHYLLGTVAGPHPFPTIVREFQKIIGEEAKQQVLKKEGVLPDKVIACVGGGSNAIGIFNDFIDDPSVELIGVEPGGRGIETGKHGCPITYGSKGIFFGMHSLMMQDKHGQVKESYSISAGLDFPSVGPQHAHLAETGRAQYVYATDDEALDAFHELSLKEGIIPALESAHALAHALKLIKHDDKEQIIIVNLSGRGDKDIFTVAEIFEERGIL.

At Lys-86 the chain carries N6-(pyridoxal phosphate)lysine.

This sequence belongs to the TrpB family. In terms of assembly, tetramer of two alpha and two beta chains. It depends on pyridoxal 5'-phosphate as a cofactor.

The enzyme catalyses (1S,2R)-1-C-(indol-3-yl)glycerol 3-phosphate + L-serine = D-glyceraldehyde 3-phosphate + L-tryptophan + H2O. It functions in the pathway amino-acid biosynthesis; L-tryptophan biosynthesis; L-tryptophan from chorismate: step 5/5. Functionally, the beta subunit is responsible for the synthesis of L-tryptophan from indole and L-serine. This chain is Tryptophan synthase beta chain, found in Psychromonas ingrahamii (strain DSM 17664 / CCUG 51855 / 37).